The following is a 109-amino-acid chain: U4-lycotoxin-Ls1a (109 aa).

An N-terminal signal peptide occupies residues 1-22 (MKVLVLFSVLFLTLFSYSSTEA). The propeptide occupies 23-44 (IDEFDSDAEDDMLSLMANEQVR). The knottin domain stretch occupies residues 45–88 (AKACTPRLHDCSHDRHSCCRGELFKDVCYCFYPEGEDKTEVCSC). Cystine bridges form between Cys48/Cys63, Cys55/Cys72, Cys62/Cys88, and Cys74/Cys86. Positions 89-108 (QQPKSHKYIEKVVDKAKTVV) are linear cationic cytotoxin domain.

The protein belongs to the neurotoxin 19 (CSTX) family. 05 (U4-Lctx) subfamily. Expressed by the venom gland.

The protein localises to the secreted. Functionally, enhances the high-affinity desensitization of human P2RX3 purinoceptors. The protein is U4-lycotoxin-Ls1a of Lycosa singoriensis (Wolf spider).